We begin with the raw amino-acid sequence, 239 residues long: Ribosomal RNA small subunit methyltransferase G (239 aa).

Residues G105, L110, V156–E157, and R169 each bind S-adenosyl-L-methionine.

The protein belongs to the methyltransferase superfamily. RNA methyltransferase RsmG family.

It localises to the cytoplasm. It catalyses the reaction guanosine(527) in 16S rRNA + S-adenosyl-L-methionine = N(7)-methylguanosine(527) in 16S rRNA + S-adenosyl-L-homocysteine. In terms of biological role, specifically methylates the N7 position of guanine in position 527 of 16S rRNA. In Verminephrobacter eiseniae (strain EF01-2), this protein is Ribosomal RNA small subunit methyltransferase G.